Here is a 144-residue protein sequence, read N- to C-terminus: Large ribosomal subunit protein uL13 (144 aa).

Belongs to the universal ribosomal protein uL13 family. In terms of assembly, part of the 50S ribosomal subunit.

Functionally, this protein is one of the early assembly proteins of the 50S ribosomal subunit, although it is not seen to bind rRNA by itself. It is important during the early stages of 50S assembly. The chain is Large ribosomal subunit protein uL13 from Clostridium perfringens (strain ATCC 13124 / DSM 756 / JCM 1290 / NCIMB 6125 / NCTC 8237 / Type A).